The sequence spans 334 residues: L-lactate dehydrogenase B chain (334 aa).

NAD(+)-binding positions include 30-58 (GQVG…MEDR) and R100. Residues R107, N139, and R170 each coordinate substrate. N139 contributes to the NAD(+) binding site. The active-site Proton acceptor is the H194. T249 is a binding site for substrate.

Belongs to the LDH/MDH superfamily. LDH family. As to quaternary structure, homotetramer.

The protein localises to the cytoplasm. The enzyme catalyses (S)-lactate + NAD(+) = pyruvate + NADH + H(+). It participates in fermentation; pyruvate fermentation to lactate; (S)-lactate from pyruvate: step 1/1. Its function is as follows. Interconverts simultaneously and stereospecifically pyruvate and lactate with concomitant interconversion of NADH and NAD(+). This Fundulus heteroclitus (Killifish) protein is L-lactate dehydrogenase B chain (ldhb).